The following is a 473-amino-acid chain: Hyaluronidase-2 (473 aa).

The first 20 residues, 1–20 (MRAGLGPIITLALVLEVAWA), serve as a signal peptide directing secretion. Disulfide bonds link cysteine 47–cysteine 340 and cysteine 211–cysteine 227. N-linked (GlcNAc...) asparagine glycosylation is found at asparagine 74 and asparagine 103. Glutamate 135 (proton donor) is an active-site residue. Asparagine 357 is a glycosylation site (N-linked (GlcNAc...) asparagine). One can recognise an EGF-like domain in the interval 361-439 (ATQYCSWTQC…YLGWGGEQCQ (79 aa)). 3 cysteine pairs are disulfide-bonded: cysteine 365-cysteine 376, cysteine 370-cysteine 427, and cysteine 429-cysteine 438. Aspartate 448 carries the GPI-anchor amidated aspartate lipid modification. Positions 449–473 (ASRAWAGAHLASLLGLVAMTLTWTL) are cleaved as a propeptide — removed in mature form.

Belongs to the glycosyl hydrolase 56 family. Interacts with MST1R.

The protein resides in the cell membrane. The enzyme catalyses Random hydrolysis of (1-&gt;4)-linkages between N-acetyl-beta-D-glucosamine and D-glucuronate residues in hyaluronate.. Its function is as follows. Catalyzes hyaluronan degradation into small fragments that are endocytosed and degraded in lysosomes by HYAL1 and exoglycosidases. Essential for the breakdown of extracellular matrix hyaluronan. The chain is Hyaluronidase-2 (Hyal2) from Rattus norvegicus (Rat).